Consider the following 164-residue polypeptide: NADH-quinone oxidoreductase subunit I 1 (164 aa).

4Fe-4S ferredoxin-type domains follow at residues 54-84 and 95-124; these read LRRYPNGEERCIACKLCEAICPAQAITIEAG and VRYDIDMVKCIYCGFCQEACPVDAIVEGPN. [4Fe-4S] cluster contacts are provided by Cys64, Cys67, Cys70, Cys74, Cys104, Cys107, Cys110, and Cys114.

Belongs to the complex I 23 kDa subunit family. NDH-1 is composed of 14 different subunits. Subunits NuoA, H, J, K, L, M, N constitute the membrane sector of the complex. The cofactor is [4Fe-4S] cluster.

It is found in the cell inner membrane. The catalysed reaction is a quinone + NADH + 5 H(+)(in) = a quinol + NAD(+) + 4 H(+)(out). Functionally, NDH-1 shuttles electrons from NADH, via FMN and iron-sulfur (Fe-S) centers, to quinones in the respiratory chain. The immediate electron acceptor for the enzyme in this species is believed to be ubiquinone. Couples the redox reaction to proton translocation (for every two electrons transferred, four hydrogen ions are translocated across the cytoplasmic membrane), and thus conserves the redox energy in a proton gradient. The chain is NADH-quinone oxidoreductase subunit I 1 from Rhizobium meliloti (strain 1021) (Ensifer meliloti).